We begin with the raw amino-acid sequence, 1084 residues long: Cellulose synthase A catalytic subunit 6 [UDP-forming] (1084 aa).

Residue Met-1 is modified to N-acetylmethionine. Residues 1–277 lie on the Cytoplasmic side of the membrane; that stretch reads MNTGGRLIAG…KSSKINPYRM (277 aa). The Zn(2+) site is built by Cys-39, Cys-42, Cys-58, Cys-61, Cys-66, Cys-69, Cys-81, and Cys-84. Residues 39 to 85 form an RING-type; degenerate zinc finger; that stretch reads CQICRDEIELTVDGEPFVACNECAFPVCRPCYEYERREGNQACPQCK. The helical transmembrane segment at 278 to 298 threads the bilayer; sequence LIVLRLVILGLFFHYRILHPV. Over 299–300 the chain is Extracellular; it reads KD. Residues 301 to 321 form a helical membrane-spanning segment; it reads AYALWLISVICEIWFAVSWVL. Residues 322–868 lie on the Cytoplasmic side of the membrane; the sequence is DQFPKWYPIE…INSVVYPWTS (547 aa). 4 residues coordinate UDP-alpha-D-glucose: Ser-360, Lys-366, Glu-367, and Asp-396. Asp-396 is a catalytic residue. A coiled-coil region spans residues 450-476; it reads VRERRAMKRDYEEFKVKINALVATAQK. Lys-537 provides a ligand contact to UDP-alpha-D-glucose. Mn(2+) contacts are provided by Lys-538 and Asp-562. A coiled-coil region spans residues 675-703; the sequence is RKAKTVAADKKKKNREASKQIHALENIEE. Asp-785 is an active-site residue. A helical transmembrane segment spans residues 869–889; sequence LPLIVYCSLPAICLLTGKFIV. Topologically, residues 890–894 are extracellular; that stretch reads PEISN. A helical membrane pass occupies residues 895-915; the sequence is YASILFMALFSSIAITGILEM. At 916–930 the chain is on the cytoplasmic side; sequence QWGKVGIDDWWRNEQ. The helical transmembrane segment at 931-951 threads the bilayer; it reads FWVIGGVSAHLFALFQGLLKV. The Extracellular portion of the chain corresponds to 952–980; the sequence is LAGVDTNFTVTSKAADDGEFSDLYLFKWT. N-linked (GlcNAc...) asparagine glycosylation is present at Asn-958. The chain crosses the membrane as a helical span at residues 981–1001; the sequence is SLLIPPMTLLIINVIGVIVGV. Topologically, residues 1002–1012 are cytoplasmic; the sequence is SDAISNGYDSW. A helical transmembrane segment spans residues 1013-1033; that stretch reads GPLFGRLFFALWVIIHLYPFL. Over 1034–1042 the chain is Extracellular; sequence KGLLGKQDR. Residues 1043 to 1063 traverse the membrane as a helical segment; the sequence is MPTIIVVWSILLASILTLLWV. The Cytoplasmic portion of the chain corresponds to 1064-1084; sequence RVNPFVAKGGPILEICGLDCL.

The protein belongs to the glycosyltransferase 2 family. Plant cellulose synthase subfamily. In terms of assembly, interacts with CESA1 and CESA3. Interacts with STL1 and STL2, but not with GOT1. Binds to CSI1 and CSI3. Interacts with PAT24/TIP1. Requires Zn(2+) as cofactor. Mn(2+) is required as a cofactor. S-acylated. In terms of tissue distribution, expressed in germinating seeds, seedlings, roots, stems, leaves and flowers. Not present in mature flowers.

It localises to the cell membrane. It catalyses the reaction [(1-&gt;4)-beta-D-glucosyl](n) + UDP-alpha-D-glucose = [(1-&gt;4)-beta-D-glucosyl](n+1) + UDP + H(+). It functions in the pathway glycan metabolism; plant cellulose biosynthesis. Its function is as follows. Catalytic subunit of cellulose synthase terminal complexes ('rosettes'), required for beta-1,4-glucan microfibril crystallization, a major mechanism of the cell wall formation. Involved in the primary cell wall formation. The presence of each protein CESA1 and CESA6 is critical for cell expansion. The hypocotyl elongation is based on a CESA6-dependent cell elongation in dark and a CESA6-independent cell elongation in light. The transition between these two mechanisms requires photosynthesis and PHYB, but not CRY1. The CESA6-dependent cell elongation seems to be independent of gibberellic acid, auxin and ethylene. May be involved in sensitivity to isoxaben. Associates with and moves along cortical microtubules for the process of cellulose deposition. The polypeptide is Cellulose synthase A catalytic subunit 6 [UDP-forming] (Arabidopsis thaliana (Mouse-ear cress)).